A 226-amino-acid polypeptide reads, in one-letter code: SURF1-like protein (226 aa).

2 consecutive transmembrane segments (helical) span residues 3–23 and 199–219; these read TNLV…WQLS and LEYA…YVIY.

This sequence belongs to the SURF1 family.

The protein resides in the cell membrane. In Rickettsia felis (strain ATCC VR-1525 / URRWXCal2) (Rickettsia azadi), this protein is SURF1-like protein.